We begin with the raw amino-acid sequence, 583 residues long: Pre-mRNA-processing protein 45 (583 aa).

Disordered regions lie at residues 1–68, 177–253, 321–424, and 519–583; these read MTSI…APED, KPKN…LTAE, MQQR…EQNR, and RGAA…DEEN. Residues 203 to 225 show a composition bias toward basic and acidic residues; that stretch reads TSRKNDRIMKIVERQQDPMEPPK. The segment covering 233-244 has biased composition (pro residues); it reads RGPPSPPPPIMH. Residues 325–350 show a composition bias toward basic and acidic residues; that stretch reads LAEKEKAQKEEHLRALAQKAREERSR. Residues 367 to 377 are compositionally biased toward low complexity; sequence RSYSDASSRSR. Composition is skewed to basic and acidic residues over residues 386 to 424, 519 to 538, and 569 to 583; these read ARERERIRRERRQDAERQLRQSRMGTERRIQAMAREQNR, RGAADAEERSGPVQFEKDTA, and PDSRGSKRARVDEEN.

The protein belongs to the SNW family. As to quaternary structure, associated with the spliceosome.

Its subcellular location is the nucleus. In terms of biological role, involved in pre-mRNA splicing. This Emericella nidulans (strain FGSC A4 / ATCC 38163 / CBS 112.46 / NRRL 194 / M139) (Aspergillus nidulans) protein is Pre-mRNA-processing protein 45 (prp45).